We begin with the raw amino-acid sequence, 161 residues long: Dihydrofolate reductase (161 aa).

Residues 2–161 (KISLISAISN…YNFCFEILSR (160 aa)) enclose the DHFR domain. 6 to 8 (ISA) provides a ligand contact to substrate. Residues 7–8 (SA) and 15–20 (IGHNNK) contribute to the NADP(+) site. Asp-28 is a binding site for substrate. Residue 44-47 (GRLT) participates in NADP(+) binding. Arg-59 contacts substrate. Residues 64-66 (ISH) and 96-101 (IGGSKI) contribute to the NADP(+) site. Thr-115 lines the substrate pocket.

This sequence belongs to the dihydrofolate reductase family.

The catalysed reaction is (6S)-5,6,7,8-tetrahydrofolate + NADP(+) = 7,8-dihydrofolate + NADPH + H(+). It participates in cofactor biosynthesis; tetrahydrofolate biosynthesis; 5,6,7,8-tetrahydrofolate from 7,8-dihydrofolate: step 1/1. In terms of biological role, key enzyme in folate metabolism. Catalyzes an essential reaction for de novo glycine and purine synthesis, and for DNA precursor synthesis. The protein is Dihydrofolate reductase (folA) of Buchnera aphidicola subsp. Schizaphis graminum (strain Sg).